The chain runs to 747 residues: Myotubularin-related protein 12 (747 aa).

Residues 205–643 enclose the Myotubularin phosphatase domain; the sequence is FDTLKDWCWE…PEIKVWAQRY (439 aa). The interval 449-558 is interaction with MTM1; the sequence is VPVFLLFLDC…KGQRKGMRFK (110 aa). A phosphoserine mark is found at Ser-564, Ser-601, and Ser-716.

The protein belongs to the protein-tyrosine phosphatase family. Non-receptor class myotubularin subfamily. As to quaternary structure, heterodimer with lipid phosphatase MTM1. Heterodimer with lipid phosphatase MTMR2. Expressed in skeletal muscles (at protein level). Ubiquitous with prominent expression in brain, heart, kidney, placenta, and lung.

Its subcellular location is the cytoplasm. The protein localises to the sarcoplasmic reticulum. It is found in the myofibril. The protein resides in the sarcomere. Acts as an adapter for the myotubularin-related phosphatases. Regulates phosphatase MTM1 protein stability and possibly its intracellular location. By stabilizing MTM1 protein levels, required for skeletal muscle maintenance but not for myogenesis. This Homo sapiens (Human) protein is Myotubularin-related protein 12 (MTMR12).